The primary structure comprises 257 residues: Imidazole glycerol phosphate synthase subunit HisF (257 aa).

Catalysis depends on residues Asp-11 and Asp-130.

It belongs to the HisA/HisF family. Heterodimer of HisH and HisF.

The protein localises to the cytoplasm. The enzyme catalyses 5-[(5-phospho-1-deoxy-D-ribulos-1-ylimino)methylamino]-1-(5-phospho-beta-D-ribosyl)imidazole-4-carboxamide + L-glutamine = D-erythro-1-(imidazol-4-yl)glycerol 3-phosphate + 5-amino-1-(5-phospho-beta-D-ribosyl)imidazole-4-carboxamide + L-glutamate + H(+). It participates in amino-acid biosynthesis; L-histidine biosynthesis; L-histidine from 5-phospho-alpha-D-ribose 1-diphosphate: step 5/9. In terms of biological role, IGPS catalyzes the conversion of PRFAR and glutamine to IGP, AICAR and glutamate. The HisF subunit catalyzes the cyclization activity that produces IGP and AICAR from PRFAR using the ammonia provided by the HisH subunit. The chain is Imidazole glycerol phosphate synthase subunit HisF from Pseudoalteromonas translucida (strain TAC 125).